Consider the following 89-residue polypeptide: Small ribosomal subunit protein bS20 (89 aa).

The interval M1–N21 is disordered. Residues A7–N21 show a composition bias toward basic residues.

Belongs to the bacterial ribosomal protein bS20 family.

Functionally, binds directly to 16S ribosomal RNA. This Acinetobacter baylyi (strain ATCC 33305 / BD413 / ADP1) protein is Small ribosomal subunit protein bS20.